The following is a 143-amino-acid chain: Endoribonuclease YbeY (143 aa).

The Zn(2+) site is built by His-109, His-113, and His-119.

It belongs to the endoribonuclease YbeY family. Zn(2+) is required as a cofactor.

The protein resides in the cytoplasm. Single strand-specific metallo-endoribonuclease involved in late-stage 70S ribosome quality control and in maturation of the 3' terminus of the 16S rRNA. This Leptospira borgpetersenii serovar Hardjo-bovis (strain JB197) protein is Endoribonuclease YbeY.